A 153-amino-acid polypeptide reads, in one-letter code: Glycosylation-dependent cell adhesion molecule 1 (153 aa).

Positions 1 to 18 (MKFLCVLLLASLAATSLA) are cleaved as a signal peptide. The O-linked (GalNAc...) threonine; partial glycan is linked to T34. S47, S52, S56, S58, and S64 each carry phosphoserine. O-linked (HexNAc...) serine glycosylation is present at S78. Residue N95 is glycosylated (N-linked (GlcNAc...) asparagine). A disordered region spans residues 95-115 (NATLGSEETTEHTPSDASTTE). Residue T104 is glycosylated (O-linked (GalNAc...) threonine).

This sequence belongs to the PP3/GlyCAM-1 family. Highly and specifically expressed in the lactating mammary gland.

It is found in the membrane. This chain is Glycosylation-dependent cell adhesion molecule 1 (GLYCAM1), found in Bos taurus (Bovine).